Consider the following 414-residue polypeptide: MDAVILCAGSGTRLYPITENRPKPMIPIAGKPILEHIIEKIENHVEKIYLVVGFEKEKIIDYFYGNEKIEFIVQEKQLGTGHAVLMAKNYIKGDFLVLNGDVIFESDILEFLNYENAVGLSKVDNPENFGVIELGYDNKVINLLEKPNEDEIKSKFTSNLINAGIYKLENFVFEILENLLPSERGEIELTDALKKLIESSKLYGIELNGYWNDIGRPWDVLSANNYFLKNIMPKISGNIENNVTITGNVIIEEGVTVKSNSVIEGPVIIKSGAFIGPLAYIRPNTVLMEDTFVGNSSEIKGSIIMKNTKIPHLSYVGDSIIGSDCNFGCNTITANLRFDDEPVTLNIKGTKVKSVRKFGAVIGDNVKTGIQVSLMPGVKVGSNSIIGANCLVDKDIEKESFVYKKDELIIKKRN.

Residues 1–208 (MDAVILCAGS…SSKLYGIELN (208 aa)) are pyrophosphorylase. UTP-binding positions include 6–9 (LCAG), Gln-74, and Gly-79. N-acetyl-alpha-D-glucosamine 1-phosphate is bound by residues Thr-80, Gly-130, Asn-142, and Asn-162. A linker region spans residues 209–228 (GYWNDIGRPWDVLSANNYFL). The tract at residues 229 to 414 (KNIMPKISGN…KDELIIKKRN (186 aa)) is N-acetyltransferase. Catalysis depends on His-312, which acts as the Proton acceptor. 2 residues coordinate acetyl-CoA: Ala-388 and Lys-405.

In the N-terminal section; belongs to the N-acetylglucosamine-1-phosphate uridyltransferase family. It in the C-terminal section; belongs to the transferase hexapeptide repeat family.

It catalyses the reaction N-acetyl-alpha-D-glucosamine 1-phosphate + UTP + H(+) = UDP-N-acetyl-alpha-D-glucosamine + diphosphate. The enzyme catalyses alpha-D-glucosamine 1-phosphate + acetyl-CoA = N-acetyl-alpha-D-glucosamine 1-phosphate + CoA + H(+). It functions in the pathway nucleotide-sugar biosynthesis; UDP-N-acetyl-alpha-D-glucosamine biosynthesis; N-acetyl-alpha-D-glucosamine 1-phosphate from alpha-D-glucosamine 6-phosphate (route II): step 2/2. It participates in nucleotide-sugar biosynthesis; UDP-N-acetyl-alpha-D-glucosamine biosynthesis; UDP-N-acetyl-alpha-D-glucosamine from N-acetyl-alpha-D-glucosamine 1-phosphate: step 1/1. Catalyzes the last two sequential reactions in the de novo biosynthetic pathway for UDP-N-acetyl-glucosamine (UDP-GlcNAc). Responsible for the acetylation of GlcN-1-P to GlcNAc-1-P, and for the uridyl transfer from UTP to GlcNAc-1-P, to produce UDP-GlcNAc and pyrophosphate. This chain is Bifunctional protein GlmU, found in Methanococcus vannielii (strain ATCC 35089 / DSM 1224 / JCM 13029 / OCM 148 / SB).